A 384-amino-acid chain; its full sequence is GDSL esterase/lipase At1g28670 (384 aa).

The N-terminal stretch at 1–24 (MASSLKKLISSFLLVLYSTTIIVA) is a signal peptide. Ser42 functions as the Nucleophile in the catalytic mechanism. Residues Asn105, Asn138, and Asn321 are each glycosylated (N-linked (GlcNAc...) asparagine). Catalysis depends on residues Asp346 and His349.

The protein belongs to the 'GDSL' lipolytic enzyme family.

The protein resides in the secreted. This Arabidopsis thaliana (Mouse-ear cress) protein is GDSL esterase/lipase At1g28670.